Consider the following 74-residue polypeptide: Exodeoxyribonuclease 7 small subunit (74 aa).

This sequence belongs to the XseB family. As to quaternary structure, heterooligomer composed of large and small subunits.

The protein resides in the cytoplasm. It catalyses the reaction Exonucleolytic cleavage in either 5'- to 3'- or 3'- to 5'-direction to yield nucleoside 5'-phosphates.. Its function is as follows. Bidirectionally degrades single-stranded DNA into large acid-insoluble oligonucleotides, which are then degraded further into small acid-soluble oligonucleotides. The protein is Exodeoxyribonuclease 7 small subunit of Leuconostoc citreum (strain KM20).